Here is a 119-residue protein sequence, read N- to C-terminus: Protein TusC (119 aa).

The protein belongs to the DsrF/TusC family. In terms of assembly, heterohexamer, formed by a dimer of trimers. The hexameric TusBCD complex contains 2 copies each of TusB, TusC and TusD. The TusBCD complex interacts with TusE.

The protein localises to the cytoplasm. Part of a sulfur-relay system required for 2-thiolation of 5-methylaminomethyl-2-thiouridine (mnm(5)s(2)U) at tRNA wobble positions. In Cronobacter sakazakii (strain ATCC BAA-894) (Enterobacter sakazakii), this protein is Protein TusC.